Here is a 343-residue protein sequence, read N- to C-terminus: Zinc finger CCCH domain-containing protein 1 (343 aa).

The segment at 1 to 102 is disordered; that stretch reads MSDSGEPKPS…PERSVFHYDS (102 aa). A compositionally biased stretch (low complexity) spans 7 to 25; sequence PKPSQQEEPLPQPAAQETQ. Positions 35-44 are enriched in basic residues; the sequence is KPTKSKNIRK. Residues 79–91 show a composition bias toward low complexity; the sequence is SSGPSKSSTTTSG. The C3H1-type zinc finger occupies 200-228; that stretch reads DYQPDICKDYKETGYCGYGDSCKFLHDRG. Positions 249 to 268 are disordered; the sequence is RNKAMGVEDEDDEADKDSDE. Positions 255 to 268 are enriched in acidic residues; sequence VEDEDDEADKDSDE. Residues 277-315 form an RING-type zinc finger; sequence CFICREPFVDPVVTKCKHYFCEHCALKHHTKNKKCFVCN.

The sequence is that of Zinc finger CCCH domain-containing protein 1 from Arabidopsis thaliana (Mouse-ear cress).